The chain runs to 518 residues: Two-component response regulator-like PRR1 (518 aa).

The Response regulatory domain occupies 29 to 147 (RILLCDSDPS…ELLNLWTHVW (119 aa)). Disordered stretches follow at residues 172–241 (PSDA…PGVM), 266–305 (TPTT…GTDV), and 483–518 (VRQA…SSPE). Residues 196–212 (NQETSTSNQHEYESNPS) show a composition bias toward polar residues. In terms of domain architecture, CCT spans 443–485 (RAAALAKFRLKRKERCFDKKVRYVNRKKLAETRPRVRGQFVRQ).

This sequence belongs to the ARR-like family. In terms of assembly, interacts with PIL13. Interacts with PIL15.

Its subcellular location is the nucleus. Its function is as follows. Controls photoperiodic flowering response. Seems to be one of the component of the circadian clock. Expression of several members of the ARR-like family is controlled by circadian rhythm. The particular coordinated sequential expression of PRR73, PRR37, PRR95, PRR59 and PPR1 result to circadian waves that may be at the basis of the endogenous circadian clock. The polypeptide is Two-component response regulator-like PRR1 (PRR1) (Oryza sativa subsp. japonica (Rice)).